We begin with the raw amino-acid sequence, 84 residues long: Replication regulatory protein repA2 (84 aa).

Polar residues predominate over residues 1-13 (MSQTENAVTSSSG). The disordered stretch occupies residues 1–31 (MSQTENAVTSSSGAKRAYRKGNPLSDAEKQR).

In terms of biological role, this protein is involved in the determination of copy number in gene replication. It binds to the repA promoter thus inhibiting the synthesis of the mRNA for the initiator protein RepA. This Escherichia coli protein is Replication regulatory protein repA2 (repA2).